The primary structure comprises 321 residues: Putative zinc finger CCCH domain-containing protein 9 (321 aa).

Disordered stretches follow at residues 1–59 (MADA…PGKK) and 181–269 (REAE…NLQE). A compositionally biased stretch (basic and acidic residues) spans 10–29 (EAERRSDETESRSIKEPKEK). The C3H1-type zinc-finger motif lies at 55-83 (RPGKKDCQFYLKNGLCRYRSSCRFNHPTQ). Residues 164 to 290 (TEWRFERERM…EARLRLEQIR (127 aa)) are a coiled coil. 2 stretches are compositionally biased toward basic and acidic residues: residues 181 to 224 (REAE…REAQ) and 231 to 244 (RQRD…REAQ).

The chain is Putative zinc finger CCCH domain-containing protein 9 from Arabidopsis thaliana (Mouse-ear cress).